The chain runs to 142 residues: Large ribosomal subunit protein bL17 (142 aa).

This sequence belongs to the bacterial ribosomal protein bL17 family. In terms of assembly, part of the 50S ribosomal subunit. Contacts protein L32.

The protein is Large ribosomal subunit protein bL17 of Wolbachia pipientis subsp. Culex pipiens (strain wPip).